The primary structure comprises 370 residues: D-aspartate oxidase (370 aa).

An N-terminal signal peptide occupies residues 1–18; sequence MPPRIIILGAGIIGLSTA. FAD-binding residues include Ile-13, Glu-42, Ala-63, Ser-64, and Gly-68. Asn-207 carries an N-linked (GlcNAc...) asparagine glycan. Residues Arg-308, Gly-338, and Tyr-339 each contribute to the FAD site.

The protein belongs to the DAMOX/DASOX family. Monomer. FAD serves as cofactor.

The enzyme catalyses D-aspartate + O2 + H2O = oxaloacetate + H2O2 + NH4(+). The catalysed reaction is D-glutamate + O2 + H2O = H2O2 + 2-oxoglutarate + NH4(+). Selectively catalyzes the oxidative deamination of acidic amino acids. Protects the organism from the toxicity of D-amino acids. Enables the organism to utilize D-amino acids as a source of nutrients. The sequence is that of D-aspartate oxidase from Talaromyces thermophilus.